The following is a 413-amino-acid chain: Peptidase T (413 aa).

Residue His-82 participates in Zn(2+) binding. Asp-84 is an active-site residue. Zn(2+) is bound at residue Asp-144. Glu-178 serves as the catalytic Proton acceptor. Residues Glu-179, Asp-201, and His-383 each coordinate Zn(2+).

It belongs to the peptidase M20B family. As to quaternary structure, homotrimer. Zn(2+) serves as cofactor.

The protein resides in the cytoplasm. The enzyme catalyses Release of the N-terminal residue from a tripeptide.. Totally inhibited by EDTA, EGTA, and 1,10-phenanthroline. Strongly inhibited by divalent cations such as Cu(2+), Cd(2+), Co(2+) and Mn(2+). Partially inhibited by the reducing agents 2-mercaptoethanol and dithiothreitol. Functionally, cleaves the N-terminal amino acid of tripeptides. Shows broad substrate specificity, exhibiting maximum activity against hydrophobic tripeptides, with the highest activity for Met-Gly-Gly. Therefore this enzyme may play an important role in flavor formation during cheese ripening. Is also able to slowly hydrolyze some hydrophobic dipeptides, but displays no activity against tetrapeptides and the tripeptide Phe-Gly-Gly. The polypeptide is Peptidase T (pepT) (Lactobacillus helveticus (Lactobacillus suntoryeus)).